Consider the following 295-residue polypeptide: 15-cis-phytoene synthase (295 aa).

This sequence belongs to the phytoene/squalene synthase family. Requires ATP as cofactor. The cofactor is Mn(2+).

The enzyme catalyses 2 (2E,6E,10E)-geranylgeranyl diphosphate = 15-cis-phytoene + 2 diphosphate. It participates in carotenoid biosynthesis; phytoene biosynthesis. With respect to regulation, significant inhibition is seen at GGPP concentrations above 100 uM. Involved in the biosynthesis of carotenoids. Catalyzes stereoselectively the condensation of two molecules of geranylgeranyl diphosphate (GGPP) to give prephytoene diphosphate (PPPP) and the subsequent rearrangement of the cyclopropylcarbinyl intermediate to yield 15-cis-phytoene. This Enterobacter agglomerans (Erwinia herbicola) protein is 15-cis-phytoene synthase (crtB).